Here is a 343-residue protein sequence, read N- to C-terminus: Transcription factor MYB11 (343 aa).

HTH myb-type domains follow at residues 9–61 (KVGI…INYL) and 62–116 (RSDI…SRKL). 2 consecutive DNA-binding regions (H-T-H motif) follow at residues 37-61 (WRSL…INYL) and 89-112 (WSTI…NSHL). The disordered stretch occupies residues 126-146 (ANTVENAPPPPKRRPGRTSRS).

In terms of tissue distribution, expressed in seedlings, roots, cotyledons, leaves and apical meristems.

The protein localises to the nucleus. Its function is as follows. Modulates overall growth by reducing the proliferation activity of meristematic cells and delaying development. Flavonol-specific transcription activator involved in the regulation of several genes of flavonoid biosynthesis. Activates the expression of CHS, CHI, F3H and FLS1. Confers tolerance to UV-B. The sequence is that of Transcription factor MYB11 from Arabidopsis thaliana (Mouse-ear cress).